The sequence spans 105 residues: Small ribosomal subunit protein uS10 (105 aa).

It belongs to the universal ribosomal protein uS10 family. Part of the 30S ribosomal subunit.

In terms of biological role, involved in the binding of tRNA to the ribosomes. The polypeptide is Small ribosomal subunit protein uS10 (Rickettsia bellii (strain OSU 85-389)).